The sequence spans 531 residues: Membrane protein insertase YidC (531 aa).

4 helical membrane passes run 5–25, 343–363, 415–435, and 489–509; these read ALIA…LFSP, GNYG…FYPL, LPML…MFSI, and PVVF…YWLV.

It belongs to the OXA1/ALB3/YidC family. Type 1 subfamily. Interacts with the Sec translocase complex via SecD. Specifically interacts with transmembrane segments of nascent integral membrane proteins during membrane integration.

It is found in the cell inner membrane. In terms of biological role, required for the insertion and/or proper folding and/or complex formation of integral membrane proteins into the membrane. Involved in integration of membrane proteins that insert both dependently and independently of the Sec translocase complex, as well as at least some lipoproteins. Aids folding of multispanning membrane proteins. This is Membrane protein insertase YidC from Geobacter sulfurreducens (strain ATCC 51573 / DSM 12127 / PCA).